The following is a 60-amino-acid chain: UPF0434 protein YcaR (60 aa).

It belongs to the UPF0434 family.

The chain is UPF0434 protein YcaR from Salmonella arizonae (strain ATCC BAA-731 / CDC346-86 / RSK2980).